A 62-amino-acid chain; its full sequence is Conotoxin Gm5.2 (62 aa).

Positions 1-22 are cleaved as a signal peptide; sequence MRCLPVFVILLLLIASAPSVDA. A propeptide spanning residues 23 to 49 is cleaved from the precursor; it reads QPKTKDDVPLAPLHDNIRSTLQTLRKK. Position 60 is a serine amide (Ser-60).

Belongs to the conotoxin T superfamily. In terms of processing, contains 2 disulfide bonds that can be either 'C1-C3, C2-C4' or 'C1-C4, C2-C3', since these disulfide connectivities have been observed for conotoxins with cysteine framework V (for examples, see AC P0DQQ7 and AC P81755). Expressed by the venom duct.

The protein resides in the secreted. The polypeptide is Conotoxin Gm5.2 (Conus gloriamaris (Glory-of-the-Sea cone)).